The sequence spans 184 residues: Class II hydrophobin 6 (184 aa).

The first 16 residues, methionine 1–alanine 16, serve as a signal peptide directing secretion. Cystine bridges form between cysteine 122-cysteine 169, cysteine 130-cysteine 160, cysteine 131-cysteine 143, and cysteine 170-cysteine 181.

This sequence belongs to the cerato-ulmin hydrophobin family. As to quaternary structure, homotetramer. Further self-assembles to form highly ordered films at water-air interfaces through intermolecular interactions. Expressed in the mycellium.

It is found in the secreted. Aerial growth, conidiation, and dispersal of filamentous fungi in the environment rely upon a capability of their secreting small amphipathic proteins called hydrophobins (HPBs) with low sequence identity. Class I can self-assemble into an outermost layer of rodlet bundles on aerial cell surfaces, conferring cellular hydrophobicity that supports fungal growth, development and dispersal; whereas Class II form highly ordered films at water-air interfaces through intermolecular interactions but contribute nothing to the rodlet structure. Hcf-6 is a class II hydrophobin that is involved in adhesion and in tomato plants infection. Is secreted to form a coat both around and beneath the fungus. This chain is Class II hydrophobin 6, found in Passalora fulva (Tomato leaf mold).